Here is a 676-residue protein sequence, read N- to C-terminus: Methionine--tRNA ligase (676 aa).

The short motif at 15 to 25 (PYANGPIHLGH) is the 'HIGH' region element. Residues Cys-146, Cys-149, Cys-159, and Cys-162 each coordinate Zn(2+). A 'KMSKS' region motif is present at residues 332–336 (KMSKS). Lys-335 is an ATP binding site. A tRNA-binding domain is found at 575–676 (DFAKIDLRIA…EGAQPGMRVK (102 aa)).

This sequence belongs to the class-I aminoacyl-tRNA synthetase family. MetG type 1 subfamily. As to quaternary structure, homodimer. Requires Zn(2+) as cofactor.

The protein localises to the cytoplasm. It catalyses the reaction tRNA(Met) + L-methionine + ATP = L-methionyl-tRNA(Met) + AMP + diphosphate. In terms of biological role, is required not only for elongation of protein synthesis but also for the initiation of all mRNA translation through initiator tRNA(fMet) aminoacylation. The polypeptide is Methionine--tRNA ligase (Shewanella sp. (strain MR-7)).